Here is a 407-residue protein sequence, read N- to C-terminus: Amylovoran biosynthesis glycosyltransferase AmsK (407 aa).

This sequence belongs to the glycosyltransferase group 1 family. Glycosyltransferase 4 subfamily.

It participates in glycan metabolism; exopolysaccharide biosynthesis. Its function is as follows. Involved in the biosynthesis of amylovoran which functions as a virulence factor. This is Amylovoran biosynthesis glycosyltransferase AmsK (amsK) from Erwinia amylovora (Fire blight bacteria).